The following is a 341-amino-acid chain: Methionine import ATP-binding protein MetN 2 (341 aa).

The ABC transporter domain occupies 2-241; that stretch reads IKLNQIVKRY…PQHEVTKRFV (240 aa). 38 to 45 contributes to the ATP binding site; it reads GFSGAGKS.

It belongs to the ABC transporter superfamily. Methionine importer (TC 3.A.1.24) family. The complex is composed of two ATP-binding proteins (MetN), two transmembrane proteins (MetI) and a solute-binding protein (MetQ).

It localises to the cell membrane. It carries out the reaction L-methionine(out) + ATP + H2O = L-methionine(in) + ADP + phosphate + H(+). It catalyses the reaction D-methionine(out) + ATP + H2O = D-methionine(in) + ADP + phosphate + H(+). Functionally, part of the ABC transporter complex MetNIQ involved in methionine import. Responsible for energy coupling to the transport system. The protein is Methionine import ATP-binding protein MetN 2 of Staphylococcus epidermidis (strain ATCC 35984 / DSM 28319 / BCRC 17069 / CCUG 31568 / BM 3577 / RP62A).